Here is a 389-residue protein sequence, read N- to C-terminus: Lipid-A-disaccharide synthase (389 aa).

Belongs to the LpxB family.

The catalysed reaction is a lipid X + a UDP-2-N,3-O-bis[(3R)-3-hydroxyacyl]-alpha-D-glucosamine = a lipid A disaccharide + UDP + H(+). Its pathway is bacterial outer membrane biogenesis; LPS lipid A biosynthesis. Condensation of UDP-2,3-diacylglucosamine and 2,3-diacylglucosamine-1-phosphate to form lipid A disaccharide, a precursor of lipid A, a phosphorylated glycolipid that anchors the lipopolysaccharide to the outer membrane of the cell. This Paraburkholderia xenovorans (strain LB400) protein is Lipid-A-disaccharide synthase.